The primary structure comprises 157 residues: SsrA-binding protein (157 aa).

The protein belongs to the SmpB family.

Its subcellular location is the cytoplasm. Its function is as follows. Required for rescue of stalled ribosomes mediated by trans-translation. Binds to transfer-messenger RNA (tmRNA), required for stable association of tmRNA with ribosomes. tmRNA and SmpB together mimic tRNA shape, replacing the anticodon stem-loop with SmpB. tmRNA is encoded by the ssrA gene; the 2 termini fold to resemble tRNA(Ala) and it encodes a 'tag peptide', a short internal open reading frame. During trans-translation Ala-aminoacylated tmRNA acts like a tRNA, entering the A-site of stalled ribosomes, displacing the stalled mRNA. The ribosome then switches to translate the ORF on the tmRNA; the nascent peptide is terminated with the 'tag peptide' encoded by the tmRNA and targeted for degradation. The ribosome is freed to recommence translation, which seems to be the essential function of trans-translation. The sequence is that of SsrA-binding protein from Clostridium novyi (strain NT).